Here is a 235-residue protein sequence, read N- to C-terminus: 7-carboxy-7-deazaguanine synthase (235 aa).

Substrate is bound by residues 25 to 27 (IQG) and Arg-40. Positions 31–235 (FTGTYSVFVR…PRLHLLVQLP (205 aa)) constitute a Radical SAM core domain. [4Fe-4S] cluster-binding residues include Cys-44, Cys-48, and Cys-51. Thr-53 is a Mg(2+) binding site. Thr-85 is a substrate binding site. S-adenosyl-L-methionine is bound by residues Gly-87 and 135 to 137 (SPK). Position 235 (Pro-235) interacts with substrate.

This sequence belongs to the radical SAM superfamily. 7-carboxy-7-deazaguanine synthase family. Homodimer. [4Fe-4S] cluster is required as a cofactor. Requires S-adenosyl-L-methionine as cofactor. It depends on Mg(2+) as a cofactor.

The catalysed reaction is 6-carboxy-5,6,7,8-tetrahydropterin + H(+) = 7-carboxy-7-deazaguanine + NH4(+). It functions in the pathway purine metabolism; 7-cyano-7-deazaguanine biosynthesis. Functionally, catalyzes the complex heterocyclic radical-mediated conversion of 6-carboxy-5,6,7,8-tetrahydropterin (CPH4) to 7-carboxy-7-deazaguanine (CDG), a step common to the biosynthetic pathways of all 7-deazapurine-containing compounds. This is 7-carboxy-7-deazaguanine synthase from Hyperthermus butylicus (strain DSM 5456 / JCM 9403 / PLM1-5).